A 237-amino-acid chain; its full sequence is Ribosomal RNA small subunit methyltransferase G (237 aa).

Residues Gly78, Phe83, 129–130 (AE), and Arg148 each bind S-adenosyl-L-methionine. Positions 218–237 (KKETPNKYPRKAGMPNKRPL) are disordered.

This sequence belongs to the methyltransferase superfamily. RNA methyltransferase RsmG family.

It localises to the cytoplasm. Specifically methylates the N7 position of a guanine in 16S rRNA. The sequence is that of Ribosomal RNA small subunit methyltransferase G from Streptococcus pneumoniae (strain JJA).